Consider the following 956-residue polypeptide: uncharacterized protein (956 aa).

The stretch at Asn918 to Lys942 forms a coiled coil.

This is an uncharacterized protein from Acanthamoeba polyphaga (Amoeba).